Reading from the N-terminus, the 343-residue chain is tRNA N6-adenosine threonylcarbamoyltransferase (343 aa).

2 residues coordinate Fe cation: His-120 and His-124. Residues 142–146, Asp-175, Gly-188, Asp-192, and Asn-281 contribute to the substrate site; that span reads VVSGG. Residue Asp-310 participates in Fe cation binding.

Belongs to the KAE1 / TsaD family. It depends on Fe(2+) as a cofactor.

Its subcellular location is the cytoplasm. The enzyme catalyses L-threonylcarbamoyladenylate + adenosine(37) in tRNA = N(6)-L-threonylcarbamoyladenosine(37) in tRNA + AMP + H(+). In terms of biological role, required for the formation of a threonylcarbamoyl group on adenosine at position 37 (t(6)A37) in tRNAs that read codons beginning with adenine. Is involved in the transfer of the threonylcarbamoyl moiety of threonylcarbamoyl-AMP (TC-AMP) to the N6 group of A37, together with TsaE and TsaB. TsaD likely plays a direct catalytic role in this reaction. The sequence is that of tRNA N6-adenosine threonylcarbamoyltransferase from Bacillus cereus (strain ATCC 14579 / DSM 31 / CCUG 7414 / JCM 2152 / NBRC 15305 / NCIMB 9373 / NCTC 2599 / NRRL B-3711).